Here is a 174-residue protein sequence, read N- to C-terminus: Protein COFACTOR ASSEMBLY OF COMPLEX C SUBUNIT B CCB3, chloroplastic (174 aa).

The N-terminal 39 residues, 1–39 (MTTVTTSFVSFSPALMIFQKKSRRSSPNFRNRSTSLPIV), are a transit peptide targeting the chloroplast. At 40–78 (SATLSHIEEAATTTNLIRQTNSISESLRNISLADLDPGT) the chain is on the lumenal side. Residues 79-99 (AKLAIGILGPALSAFGFLFIL) traverse the membrane as a helical segment. Over 100–147 (RIVMSWYPKLPVDKFPYVLAYAPTEPILVQTRKVIPPLAGVDVTPVVW) the chain is Stromal. The chain crosses the membrane as a helical span at residues 148–168 (FGLVSFLSEILVGPQGLLVLV). Residues 169–174 (SQQQVN) lie on the Lumenal side of the membrane.

This sequence belongs to the YggT family.

It localises to the plastid. It is found in the chloroplast thylakoid membrane. In terms of biological role, required for the biogenesis and accumulation of native cytochrome b6 in the thylakoid membrane. Controls the conversion of apocytochrome b6 to holocytochrome b6. Required for covalent binding of the c-type heme to cytochrome b6. The protein is Protein COFACTOR ASSEMBLY OF COMPLEX C SUBUNIT B CCB3, chloroplastic of Arabidopsis thaliana (Mouse-ear cress).